The primary structure comprises 701 residues: MAQKDVLTDLTKVRNIGIMAHIDAGKTTTTERILYYTGISYKIGEVHDGAATMDWMEQEQERGITITSAATTCFWNDNQINIIDTPGHVDFTVEVERSLRVLDGAVAVFDGKEGVEPQSEQVWRQADKYEVPRICFVNKMDKIGADFYFSVRTMQERLGANVIPIQLPVGSEGDFEGVVDLVEMKAKVWSTEAKLGEKYDVVGIPTDLQEKAEEYRTNLLETVAETDEALLEKYFSGEELTVAEIKGAIRKLTISSEAYPVLCGSAFKNKGVQPMLDAVIDYLPSPLDVPAAIGHVPGKEDEEIVRKPSTDEPLSALAFKVATHPFFGKLTYVRVYSGKVDSGSQVINATKGKKERLGKLFQMHSNKENPVETASAGHIYAVIGLKDTTTGDTLADPNNQIVLESMTFPDPVIEVAIEPKTKSDQEKLSLSIQKLAEEDPTFKVHLDSETGQTVIGGMGELHLDILVDRMRREFKVEANVGKPQVAYKETIRRVVETVEYTHKKQTGGSGQFAKVIIKLEPFSGENGATYEFENKVTGGRIPREYIPSVEAGARDAMQYGVLAGYPLVNLKVTLLDGAYHDVDSSEIAFKIAGSQVLKKAAAQAQPVILEPIMAVEVTTPEDYMGDVIGDLHSRRGQIQAMKERAGTRVVRAHVPLSEMFGYVGDLRSKTQGRANYSMVFNSYSEVPANVSKEIIAKATGE.

One can recognise a tr-type G domain in the interval 11–287 (TKVRNIGIMA…AVIDYLPSPL (277 aa)). GTP-binding positions include 20 to 27 (AHIDAGKT), 84 to 88 (DTPGH), and 138 to 141 (NKMD).

It belongs to the TRAFAC class translation factor GTPase superfamily. Classic translation factor GTPase family. EF-G/EF-2 subfamily.

The protein localises to the cytoplasm. Functionally, catalyzes the GTP-dependent ribosomal translocation step during translation elongation. During this step, the ribosome changes from the pre-translocational (PRE) to the post-translocational (POST) state as the newly formed A-site-bound peptidyl-tRNA and P-site-bound deacylated tRNA move to the P and E sites, respectively. Catalyzes the coordinated movement of the two tRNA molecules, the mRNA and conformational changes in the ribosome. This is Elongation factor G from Mycobacterium leprae (strain Br4923).